Consider the following 734-residue polypeptide: MKAYAFGFPKIGEKREFKKALEDFWKGKITEEQFEEEMNKLRMYMVENYRKNVDVIPSNELSYYDFVLDTAVMVGAVPERFGEYRGLSTYFDMARGGKALEMTKFFNTNYHYLVPEIETEEFYLLENKPLEDYLFFKSKGIETAPWVIGPFTFLYLSKRNGEWIRRPNQMEKLLESLVSVYKEVFEKLVENGCKEILVNEPAFVCDLEKAHWDLILNVYRELSEFPLTVFTYYDSVSDYEACVSLPVKRLHFDFVSNEENLKNLEKHGFPEDKKLVAGVINGRQPWKVDLRKVASLVEKLGASAISNSCPLFHLPVTLELENNLPGGLKEKLAFAKEKLEELKMLKDFLEGKTFDLPNVSFEDFAVDLQAVERVRNLPEDSFRREKEYTERDRIQRERLNLPLFPTTTIGSFPQTPEVRKMRSKYRKGEISKEEYEAFIKEQIKKAIELQEEIGLDVLVHGEFERTDMVEFFAEKLNGIATTQNGWVLSYGSRCYRPPIIYGTVTRPEPMTLKEITYAQSLTEKPVKGMLTGPVTIMSWSYYREDIPEREIAYQIALAINEEVKDLEEAGIKIVQIDEPAFREKAPIKKSKWPEYFEWAINAFNLAANARPETQIHAHMCYSDFNEIIEYIHQLEFDVISIEASRSKGEIISAFENFKGWIKQIGVGVWDIHSPAVPSINEMREIVERVLRVLPKELIWINPDCGLKTRNWDEVIPSLRNMVALAKEMREKFES.

5-methyltetrahydropteroyltri-L-glutamate contacts are provided by residues 15 to 18 (REFK) and Lys104. L-homocysteine contacts are provided by residues 409–411 (IGS) and Glu462. Residues 409–411 (IGS) and Glu462 each bind L-methionine. 5-methyltetrahydropteroyltri-L-glutamate contacts are provided by residues 493–494 (RC) and Trp539. Asp577 is a binding site for L-homocysteine. Position 577 (Asp577) interacts with L-methionine. Glu583 serves as a coordination point for 5-methyltetrahydropteroyltri-L-glutamate. 3 residues coordinate Zn(2+): His618, Cys620, and Glu642. His672 functions as the Proton donor in the catalytic mechanism. Cys704 contributes to the Zn(2+) binding site.

This sequence belongs to the vitamin-B12 independent methionine synthase family. Zn(2+) serves as cofactor.

The catalysed reaction is 5-methyltetrahydropteroyltri-L-glutamate + L-homocysteine = tetrahydropteroyltri-L-glutamate + L-methionine. The protein operates within amino-acid biosynthesis; L-methionine biosynthesis via de novo pathway; L-methionine from L-homocysteine (MetE route): step 1/1. In terms of biological role, catalyzes the transfer of a methyl group from 5-methyltetrahydrofolate to homocysteine resulting in methionine formation. This is 5-methyltetrahydropteroyltriglutamate--homocysteine methyltransferase from Thermotoga maritima (strain ATCC 43589 / DSM 3109 / JCM 10099 / NBRC 100826 / MSB8).